A 329-amino-acid chain; its full sequence is Pantothenate kinase (329 aa).

ATP is bound at residue 107–114; sequence GSVAVGKS.

The protein belongs to the prokaryotic pantothenate kinase family.

Its subcellular location is the cytoplasm. It carries out the reaction (R)-pantothenate + ATP = (R)-4'-phosphopantothenate + ADP + H(+). Its pathway is cofactor biosynthesis; coenzyme A biosynthesis; CoA from (R)-pantothenate: step 1/5. The sequence is that of Pantothenate kinase from Streptomyces avermitilis (strain ATCC 31267 / DSM 46492 / JCM 5070 / NBRC 14893 / NCIMB 12804 / NRRL 8165 / MA-4680).